The chain runs to 343 residues: 2-alkenal reductase (NADP(+)-dependent) (343 aa).

2 residues coordinate substrate: tyrosine 55 and tyrosine 80. Residues 165–166 (AV), glycine 186, lysine 190, tyrosine 206, asparagine 230, cysteine 252, tyrosine 258, 282–284 (FLV), and asparagine 332 each bind NADP(+).

This sequence belongs to the NADP-dependent oxidoreductase L4BD family. As to quaternary structure, homodimer.

The catalysed reaction is an n-alkanal + NADP(+) = an alk-2-enal + NADPH + H(+). Functionally, reduces the C=C double bonds of alpha, beta unsaturated enones, but has no activity on enones with an endocyclic C=C double-bond. Shows a high specificity for NADPH as the hybrid donor. Substrates are 1-nitrocyclohexene, 2-methylpentenal, trans-cinnamaldehyde, methyl-trans-2-methylcinnamaldehyde, trans-2-nonenal and 1-octen-3-one. Reduced activity with aplha-methyl transcinnamaldehyde, 1-cyclohexene-1-carboxaldehyde, methyl crotonate, (R)-pulegone, and dimethyl itaconate and no activity with maleimides, citral, (5R)- or (5S)-carvone, (S)-perillyl alcohol, and substituted cyclohexenones and cyclopentenones. May also act as a allyl-alcohol dehydrogenase by catalyzing the dehydrogenation of secondary allylic alcohols rather than saturated secondary alcohols. Allyl-alcohol dehydrogenase is specific for the S-stereoisomer of the alcohols. The chain is 2-alkenal reductase (NADP(+)-dependent) (DBR) from Nicotiana tabacum (Common tobacco).